Here is a 457-residue protein sequence, read N- to C-terminus: Multidrug resistance protein MdtK (457 aa).

The Cytoplasmic segment spans residues methionine 1–leucine 10. Residues leucine 11–valine 31 form a helical membrane-spanning segment. Residues aspartate 32–serine 52 lie on the Periplasmic side of the membrane. The chain crosses the membrane as a helical span at residues isoleucine 53 to alanine 73. Residues glutamine 74 to phenylalanine 92 lie on the Cytoplasmic side of the membrane. A helical transmembrane segment spans residues tryptophan 93–isoleucine 113. The Periplasmic portion of the chain corresponds to arginine 114–lysine 126. Residues alanine 127 to alanine 147 form a helical membrane-spanning segment. Residues arginine 148–proline 159 lie on the Cytoplasmic side of the membrane. The chain crosses the membrane as a helical span at residues glycine 160–tyrosine 180. At glycine 181–leucine 188 the chain is on the periplasmic side. Residues glycine 189–valine 209 traverse the membrane as a helical segment. Topologically, residues serine 210–glycine 242 are cytoplasmic. Residues leucine 243–valine 263 form a helical membrane-spanning segment. Over serine 264–glutamine 275 the chain is Periplasmic. The chain crosses the membrane as a helical span at residues isoleucine 276–threonine 296. The Cytoplasmic segment spans residues isoleucine 297 to threonine 313. Residues alanine 314–valine 334 form a helical membrane-spanning segment. The Periplasmic portion of the chain corresponds to serine 335–glutamate 349. The helical transmembrane segment at valine 350–isoleucine 370 threads the bilayer. At glutamine 371 to serine 386 the chain is on the cytoplasmic side. A helical transmembrane segment spans residues isoleucine 387–alanine 407. Topologically, residues leucine 408–glycine 417 are periplasmic. The helical transmembrane segment at proline 418–leucine 438 threads the bilayer. Topologically, residues arginine 439–arginine 457 are cytoplasmic.

The protein belongs to the multi antimicrobial extrusion (MATE) (TC 2.A.66.1) family. MdtK subfamily.

The protein resides in the cell inner membrane. In terms of biological role, multidrug efflux pump that functions probably as a Na(+)/drug antiporter. In Shigella boydii serotype 4 (strain Sb227), this protein is Multidrug resistance protein MdtK.